We begin with the raw amino-acid sequence, 559 residues long: MGSSGFSWTLPDHPKLPKGKSVAVVVLDGWGEANPDQYNCIHVAQTPVMDSLKNGAPEKWRLVKAHGTAVGLPSDDDMGNSEVGHNALGAGRIFAQGAKLVDQALASGKIYDGDGFNYIKESFESGTLHLIGLLSDGGVHSRLDQLQLLLKGVSERGAKKIRVHILTDGRDVLDGSSIGFVETLENDLLELRAKGVDAQIASGGGRMYVTMDRYENDWDVVKRGWDAQVLGEAPYKFKSALEAVKTLRAQPKANDQYLPPFVIVDDSGNAVGPVLDGDAVVTINFRADRMVMLAKALEYADFDNFDRVRVPKIRYAGMLQYDGELKLPSRYLVSPPEIDRTSGEYLVKNGIRTFACSETVKFGHVTFFWNGNRSGYFDATKEEYVEVPSDSGITFNVAPNMKALEIAEKARDALLSGKFDQVRVNLPNGDMVGHTGDIEATVVACKAADEAVKIILDAVEQVGGIYLVTADHGNAEDMVKRNKSGKPLLDKNDRIQILTSHTLQPVPVAIGGPGLHPGVKFRNDIQTPGLANVAATVMNLHGFEAPADYEQTLIEVADN.

Mn(2+) contacts are provided by aspartate 28 and serine 81. Serine 81 acts as the Phosphoserine intermediate in catalysis. Substrate contacts are provided by residues histidine 140, 170 to 171, arginine 206, arginine 213, 286 to 289, and lysine 361; these read RD and RADR. Positions 430, 434, 471, 472, and 501 each coordinate Mn(2+).

It belongs to the BPG-independent phosphoglycerate mutase family. Monomer. It depends on Mn(2+) as a cofactor. In terms of processing, the N-terminus is blocked. As to expression, found ubiquitously in germinating seed.

The protein localises to the cytoplasm. It carries out the reaction (2R)-2-phosphoglycerate = (2R)-3-phosphoglycerate. Its pathway is carbohydrate degradation; glycolysis; pyruvate from D-glyceraldehyde 3-phosphate: step 3/5. Functionally, catalyzes the interconversion of 2-phosphoglycerate and 3-phosphoglycerate. This is 2,3-bisphosphoglycerate-independent phosphoglycerate mutase from Zea mays (Maize).